The sequence spans 225 residues: PKHD-type hydroxylase YbiX (225 aa).

One can recognise a Fe2OG dioxygenase domain in the interval 78–177 (TLSTPLFNRY…RVASFMWIQS (100 aa)). Residues H96, D98, and H158 each coordinate Fe cation. R168 serves as a coordination point for 2-oxoglutarate.

The cofactor is Fe(2+). It depends on L-ascorbate as a cofactor.

In Escherichia coli O45:K1 (strain S88 / ExPEC), this protein is PKHD-type hydroxylase YbiX.